We begin with the raw amino-acid sequence, 37 residues long: Potassium channel toxin alpha-KTx 4.3 (37 aa).

3 disulfide bridges follow: C7–C28, C13–C33, and C17–C35. The interaction with Ca(2+)-activated K(+) channels stretch occupies residues 26 to 33 (GKCMNGKC).

In terms of tissue distribution, expressed by the venom gland.

The protein resides in the secreted. Blocks reversibly Shaker B potassium-channels. This Tityus discrepans (Venezuelan scorpion) protein is Potassium channel toxin alpha-KTx 4.3.